Here is a 335-residue protein sequence, read N- to C-terminus: MNIAVSKPDLTIRLCGPRGFCAGVDRAIQIVVLALKSYGAPVYVRHEIVHNRYVVEGLEAKGAIFVEELDEIPAEHRAQPVVFSAHGVPKAVPEDADARNLFYLDATCPLVSKVHKQAMRHNRLGRHVVLIGHAGHPEVIGTMGQLPEGTVSLIETVEDVDVYEPADPDNLGYVTQTTLSVDDTAGVIARLQERFPNLTAPSADSICYATTNRQEVVKQAAPGCDLFIVVGAPNSSNSKRLVEVALRAGATKSVLVQRAAEIDWDDIGDIKTVGLSAGASAPEVIVNEIIEAFRDRYSAVVELAETVKETENFLVNRELRNIELTTADMAFVNGE.

Cys-21 is a [4Fe-4S] cluster binding site. Positions 50 and 86 each coordinate (2E)-4-hydroxy-3-methylbut-2-enyl diphosphate. Dimethylallyl diphosphate is bound by residues His-50 and His-86. Positions 50 and 86 each coordinate isopentenyl diphosphate. A [4Fe-4S] cluster-binding site is contributed by Cys-108. His-136 contributes to the (2E)-4-hydroxy-3-methylbut-2-enyl diphosphate binding site. A dimethylallyl diphosphate-binding site is contributed by His-136. Residue His-136 participates in isopentenyl diphosphate binding. Glu-138 serves as the catalytic Proton donor. Thr-177 is a (2E)-4-hydroxy-3-methylbut-2-enyl diphosphate binding site. Cys-207 provides a ligand contact to [4Fe-4S] cluster. (2E)-4-hydroxy-3-methylbut-2-enyl diphosphate contacts are provided by Ser-235, Ser-236, Asn-237, and Ser-280. 4 residues coordinate dimethylallyl diphosphate: Ser-235, Ser-236, Asn-237, and Ser-280. Ser-235, Ser-236, Asn-237, and Ser-280 together coordinate isopentenyl diphosphate.

This sequence belongs to the IspH family. [4Fe-4S] cluster is required as a cofactor.

The catalysed reaction is isopentenyl diphosphate + 2 oxidized [2Fe-2S]-[ferredoxin] + H2O = (2E)-4-hydroxy-3-methylbut-2-enyl diphosphate + 2 reduced [2Fe-2S]-[ferredoxin] + 2 H(+). It carries out the reaction dimethylallyl diphosphate + 2 oxidized [2Fe-2S]-[ferredoxin] + H2O = (2E)-4-hydroxy-3-methylbut-2-enyl diphosphate + 2 reduced [2Fe-2S]-[ferredoxin] + 2 H(+). The protein operates within isoprenoid biosynthesis; dimethylallyl diphosphate biosynthesis; dimethylallyl diphosphate from (2E)-4-hydroxy-3-methylbutenyl diphosphate: step 1/1. Its pathway is isoprenoid biosynthesis; isopentenyl diphosphate biosynthesis via DXP pathway; isopentenyl diphosphate from 1-deoxy-D-xylulose 5-phosphate: step 6/6. Its function is as follows. Catalyzes the conversion of 1-hydroxy-2-methyl-2-(E)-butenyl 4-diphosphate (HMBPP) into a mixture of isopentenyl diphosphate (IPP) and dimethylallyl diphosphate (DMAPP). Acts in the terminal step of the DOXP/MEP pathway for isoprenoid precursor biosynthesis. This Rhizobium rhizogenes (strain K84 / ATCC BAA-868) (Agrobacterium radiobacter) protein is 4-hydroxy-3-methylbut-2-enyl diphosphate reductase.